Reading from the N-terminus, the 538-residue chain is Furcatin hydrolase (538 aa).

Residues Met-1–Ser-66 constitute a chloroplast transit peptide. Positions Ser-18–Pro-37 are disordered. A beta-D-glucoside is bound by residues Gln-88, His-192, and Asn-237–Glu-238. Glu-238 (proton donor) is an active-site residue. A disulfide bond links Cys-257 and Cys-260. A beta-D-glucoside contacts are provided by residues Tyr-376, Glu-447, Trp-494, Glu-501–Trp-502, and Phe-510. The active-site Nucleophile is Glu-447.

The protein belongs to the glycosyl hydrolase 1 family. In terms of tissue distribution, expressed in young and mature leaves, but not in fruit and stem.

Its subcellular location is the plastid. The protein localises to the chloroplast. It carries out the reaction 7-[beta-D-apiofuranosyl-(1-&gt;6)-beta-D-glucopyranosyloxy]isoflavonoid + H2O = a 7-hydroxyisoflavonoid + beta-D-apiofuranosyl-(1-&gt;6)-D-glucose.. Functionally, disaccharide-specific acuminosidase, hydrolyzes the beta-glycosidic bond between p-allylphenol and acuminose with retention of anomeric configuration. Has highest activity towards furcatin, and lower activity towards beta-primeverosides and beta-vicianoside. Has very low activity towards beta-gentobiosides. This chain is Furcatin hydrolase, found in Viburnum furcatum (Scarlet leaved viburnum).